The sequence spans 321 residues: o-succinylbenzoate synthase (321 aa).

Residue Lys-110 is the Proton donor of the active site. Mg(2+) contacts are provided by Asp-138, Glu-165, and Asp-188. The active-site Proton acceptor is Lys-212.

It belongs to the mandelate racemase/muconate lactonizing enzyme family. MenC type 1 subfamily. The cofactor is a divalent metal cation.

The catalysed reaction is (1R,6R)-6-hydroxy-2-succinyl-cyclohexa-2,4-diene-1-carboxylate = 2-succinylbenzoate + H2O. The protein operates within quinol/quinone metabolism; 1,4-dihydroxy-2-naphthoate biosynthesis; 1,4-dihydroxy-2-naphthoate from chorismate: step 4/7. Its pathway is quinol/quinone metabolism; menaquinone biosynthesis. Its function is as follows. Converts 2-succinyl-6-hydroxy-2,4-cyclohexadiene-1-carboxylate (SHCHC) to 2-succinylbenzoate (OSB). This is o-succinylbenzoate synthase from Mycolicibacterium smegmatis (strain ATCC 700084 / mc(2)155) (Mycobacterium smegmatis).